Reading from the N-terminus, the 456-residue chain is Hydroxyproline dehydrogenase (456 aa).

An N6-acetyllysine mark is found at Lys-310 and Lys-320.

This sequence belongs to the proline oxidase family. It depends on FAD as a cofactor.

The catalysed reaction is trans-4-hydroxy-L-proline + a quinone = (3R,5S)-1-pyrroline-3-hydroxy-5-carboxylate + a quinol + H(+). The enzyme catalyses L-proline + a quinone = (S)-1-pyrroline-5-carboxylate + a quinol + H(+). In terms of biological role, dehydrogenase that converts trans-4-L-hydroxyproline to delta-1-pyrroline-3-hydroxy-5-carboxylate (Hyp) using ubiquinone-10 as the terminal electron acceptor. Can also use proline as a substrate but with a very much lower efficiency. Does not react with other diastereomers of Hyp: trans-4-D-hydroxyproline and cis-4-L-hydroxyproline. Ubiquininone analogs such as menadione, duroquinone and ubiquinone-1 react more efficiently than oxygen as the terminal electron acceptor during catalysis. In Mus musculus (Mouse), this protein is Hydroxyproline dehydrogenase.